Reading from the N-terminus, the 176-residue chain is Superoxide oxidase CybB (176 aa).

The Cytoplasmic segment spans residues 1–7 (MENKYSR). A helical membrane pass occupies residues 8–29 (LQISIHWLVFLLVIAAYCAMEF). H13 contributes to the heme b binding site. Over 30–39 (RGFFPRSDRP) the chain is Periplasmic. Residues 40–64 (LINMIHVSCGISILVLMVVRLLLRL) traverse the membrane as a helical segment. H45 lines the heme b pocket. Residues 65–77 (KYPTPPIIPKPKP) lie on the Cytoplasmic side of the membrane. Residues 78–103 (MMTGLAHLGHLVIYLLFIALPVIGLV) form a helical membrane-spanning segment. Over 104-135 (MMYNRGNPWFAFGLTMPYASEANFERVDSLKS) the chain is Periplasmic. Residues 136 to 158 (WHETLANLGYFVIGLHAAAALAH) form a helical membrane-spanning segment. Residues H137 and H151 each coordinate heme b. At 159 to 176 (HYFWKDNTLLRMMPRKRS) the chain is on the cytoplasmic side.

Belongs to the cytochrome b561 family. Monomer. Heme b serves as cofactor.

It is found in the cell inner membrane. The catalysed reaction is a ubiquinol + 2 O2 = 2 superoxide + a ubiquinone + 2 H(+). The enzyme catalyses a menaquinol + 2 O2 = 2 superoxide + a menaquinone + 2 H(+). Quinone binding to the enzyme accelerates the reaction with superoxide. In terms of biological role, B-type di-heme cytochrome. Catalyzes the oxidation of superoxide to molecular oxygen and transfers the extracted electrons to ubiquinone through the two hemes. Can also use menaquinone. The enzyme may be responsible for the detoxification of the superoxide anion produced in the membrane or at its surface. However, it can also efficiently catalyze the formation of superoxide from ubiquinol under physiological conditions. This Escherichia coli (strain K12) protein is Superoxide oxidase CybB.